We begin with the raw amino-acid sequence, 675 residues long: Vitamin K-dependent protein S (675 aa).

The N-terminal stretch at 1–24 is a signal peptide; that stretch reads MRVLGGRTGTLLACLALVLPVLEA. Residues 25 to 41 constitute a propeptide that is removed on maturation; the sequence is NFLSRQHASQVLIRRRR. Residues 42–87 form the Gla domain; it reads ANTLLEETKKGNLERECIEELCNKEEAREIFENNPETEYFYPKYLG. 11 positions are modified to 4-carboxyglutamate: E47, E48, E55, E57, E60, E61, E66, E67, E70, E73, and E77. C58 and C63 form a disulfide bridge. Intrachain disulfides connect C88–C113, C121–C134, C126–C143, C145–C154, C161–C175, C171–C184, C186–C199, C205–C217, C212–C226, C228–C241, C247–C256, C252–C265, C267–C282, C288–C567, C449–C475, and C638–C665. The interval 88–116 is thrombin-sensitive; it reads CLGSFRAGLFTAARLSTNAYPDLRSCVNA. Residues 117–155 form the EGF-like 1 domain; the sequence is ISDQCNPLPCNEDGFMTCKDGQATFTCICKSGWQGEKCE. D136 is subject to (3R)-3-hydroxyaspartate. The EGF-like 2; calcium-binding domain occupies 157-200; that stretch reads DINECKDPVNINGGCSQICENTPGSYHCSCKNGFVMLSNKKDCK. At N177 the chain carries (3R)-3-hydroxyasparagine. The region spanning 201–242 is the EGF-like 3; calcium-binding domain; the sequence is DVDECVLKPSICGTAVCKNIPGDFECECAEGYKYNPVSKSCD. At N219 the chain carries (3R)-3-hydroxyasparagine. The EGF-like 4; calcium-binding domain occupies 243-283; the sequence is DVDECAENLCAQLCVNYPGGYSCYCDGKKGFKLAQDQKSCE. Residue N258 is modified to (3R)-3-hydroxyasparagine. Laminin G-like domains lie at 299 to 475 and 484 to 665; these read LLYL…NKHC and YYPG…AHSC. N-linked (GlcNAc...) asparagine glycans are attached at residues N499 and N509.

Post-translationally, the iron and 2-oxoglutarate dependent 3-hydroxylation of aspartate and asparagine is (R) stereospecific within EGF domains. Plasma.

It localises to the secreted. In terms of biological role, anticoagulant plasma protein; it is a cofactor to activated protein C in the degradation of coagulation factors Va and VIIIa. It helps to prevent coagulation and stimulating fibrinolysis. The polypeptide is Vitamin K-dependent protein S (PROS1) (Bos taurus (Bovine)).